We begin with the raw amino-acid sequence, 506 residues long: Anaerobic nitric oxide reductase transcription regulator NorR (506 aa).

4-aspartylphosphate is present on Asp-57. Positions 187–416 (MIGLSPAMTQ…LEHAIHRAVV (230 aa)) constitute a Sigma-54 factor interaction domain. ATP contacts are provided by residues 215-222 (GETGTGKE) and 278-287 (ADNGTLFLDE). Positions 481–500 (WAASARALETDVANLHRLAK) form a DNA-binding region, H-T-H motif.

The protein operates within nitrogen metabolism; nitric oxide reduction. Required for the expression of anaerobic nitric oxide (NO) reductase, acts as a transcriptional activator for at least the norVW operon. Activation also requires sigma-54. This is Anaerobic nitric oxide reductase transcription regulator NorR from Salmonella paratyphi C (strain RKS4594).